Reading from the N-terminus, the 1006-residue chain is Probable protein phosphatase DDB_G0279461 (1006 aa).

Polar residues predominate over residues M1–S12. 7 disordered regions span residues M1 to E119, S146 to S188, S214 to R269, D312 to Q387, N459 to Q513, D525 to F563, and G604 to S642. The segment covering N59–L69 has biased composition (acidic residues). A coiled-coil region spans residues A65–N122. The segment covering N77–G88 has biased composition (low complexity). Residues I89–D99 are compositionally biased toward acidic residues. The segment covering N100–N117 has biased composition (low complexity). The span at S146–S158 shows a compositional bias: polar residues. Low complexity-rich tracts occupy residues S220–N234, N244–N254, and N316–Q387. Residues K450–Q516 are a coiled coil. A compositionally biased stretch (polar residues) spans T466–H481. A compositionally biased stretch (low complexity) spans N482–N511. The span at D525–N538 shows a compositional bias: polar residues. Low complexity-rich tracts occupy residues S552 to S561 and N613 to T639. The PPM-type phosphatase domain occupies D744–L1005. Residues D784, G785, D956, and D996 each contribute to the Mn(2+) site.

It in the C-terminal section; belongs to the PP2C family. Mg(2+) serves as cofactor. Requires Mn(2+) as cofactor.

The catalysed reaction is O-phospho-L-seryl-[protein] + H2O = L-seryl-[protein] + phosphate. It carries out the reaction O-phospho-L-threonyl-[protein] + H2O = L-threonyl-[protein] + phosphate. The sequence is that of Probable protein phosphatase DDB_G0279461 from Dictyostelium discoideum (Social amoeba).